Consider the following 424-residue polypeptide: MAKNIQAIRGMNDYLPGETAIWQRIEGTLKNVLGSYGYSEIRLPIVEQTPLFKRAIGEVTDVVEKEMYTFEDRNGDSLTLRPEGTAGCVRAGIEHGLLYNQEQRLWYIGPMFRHERPQKGRYRQFHQLGCEVFGLQGPDIDAELIMLTARWWRALGISEHVTLELNSIGSLEARANYRDALVAFLEQYKDKLDEDCKRRMYTNPLRVLDSKNPEVQALLNDAPALGDYLDEESREHFAGLCKLLESAGIAYTVNQRLVRGLDYYNRTVFEWVTNSLGSQGTVCAGGRYDGLVEQLGGRATPAVGFAMGLERLVLLVQAVNPEFKADPVVDIYLVASGADTQSAAMALAERLRDELPGVKLMTNHGGGNFKKQFARADKWGARVAVVLGESEVANGTAVVKDLRSGEQTAVAQDSVAAHLRTLLG.

It belongs to the class-II aminoacyl-tRNA synthetase family. In terms of assembly, homodimer.

The protein resides in the cytoplasm. It carries out the reaction tRNA(His) + L-histidine + ATP = L-histidyl-tRNA(His) + AMP + diphosphate + H(+). In Escherichia coli (strain SE11), this protein is Histidine--tRNA ligase.